The chain runs to 367 residues: 2-aminoethylphosphonate--pyruvate transaminase (367 aa).

Position 193 is an N6-(pyridoxal phosphate)lysine (K193).

This sequence belongs to the class-V pyridoxal-phosphate-dependent aminotransferase family. PhnW subfamily. As to quaternary structure, homodimer. Pyridoxal 5'-phosphate serves as cofactor.

The catalysed reaction is (2-aminoethyl)phosphonate + pyruvate = phosphonoacetaldehyde + L-alanine. Involved in phosphonate degradation. The protein is 2-aminoethylphosphonate--pyruvate transaminase of Vibrio vulnificus (strain CMCP6).